The primary structure comprises 582 residues: Phosphoglucomutase, cytoplasmic (582 aa).

Alpha-D-glucose 1,6-bisphosphate is bound by residues Arg-25 and Ser-124. Ser-124 (phosphoserine intermediate) is an active-site residue. Residues Ser-124, Asp-300, Asp-302, and Asp-304 each coordinate Mg(2+). The residue at position 124 (Ser-124) is a Phosphoserine. Residues Asp-304, Arg-305, Thr-368, Glu-387, Ser-389, and Lys-400 each contribute to the alpha-D-glucose 1,6-bisphosphate site.

This sequence belongs to the phosphohexose mutase family. As to quaternary structure, monomer. Requires Mg(2+) as cofactor.

It is found in the cytoplasm. It carries out the reaction alpha-D-glucose 1-phosphate = alpha-D-glucose 6-phosphate. The enzyme catalyses O-phospho-L-seryl-[protein] + alpha-D-glucose 1-phosphate = alpha-D-glucose 1,6-bisphosphate + L-seryl-[protein]. The catalysed reaction is alpha-D-glucose 1,6-bisphosphate + L-seryl-[protein] = O-phospho-L-seryl-[protein] + alpha-D-glucose 6-phosphate. Catalyzes the reversible isomerization of alpha-D-glucose 1-phosphate to alpha-D-glucose 6-phosphate. The mechanism proceeds via the intermediate compound alpha-D-glucose 1,6-bisphosphate. This enzyme participates in both the breakdown and synthesis of glucose. In Pisum sativum (Garden pea), this protein is Phosphoglucomutase, cytoplasmic (PGM1).